The following is a 229-amino-acid chain: Ribonuclease 3 (229 aa).

Positions 5-127 (LSRLERQLGY…LIGAIYLDAG (123 aa)) constitute an RNase III domain. Glu-40 contributes to the Mg(2+) binding site. Asp-44 is a catalytic residue. Asp-113 and Glu-116 together coordinate Mg(2+). Residue Glu-116 is part of the active site. The region spanning 154-224 (DPKTRLQEFL…AAAALIALGV (71 aa)) is the DRBM domain.

The protein belongs to the ribonuclease III family. In terms of assembly, homodimer. Mg(2+) is required as a cofactor.

It is found in the cytoplasm. The enzyme catalyses Endonucleolytic cleavage to 5'-phosphomonoester.. Functionally, digests double-stranded RNA. Involved in the processing of primary rRNA transcript to yield the immediate precursors to the large and small rRNAs (23S and 16S). Processes some mRNAs, and tRNAs when they are encoded in the rRNA operon. Processes pre-crRNA and tracrRNA of type II CRISPR loci if present in the organism. The protein is Ribonuclease 3 of Pseudomonas fluorescens (strain Pf0-1).